The sequence spans 552 residues: Cytochrome P450 monooxyhenase eriI (552 aa).

Residues 9–26 traverse the membrane as a helical segment; sequence FALKASAAVAVLLLAAWV. 2 N-linked (GlcNAc...) asparagine glycosylation sites follow: N50 and N447. Position 495 (C495) interacts with heme.

Belongs to the cytochrome P450 family. Heme serves as cofactor.

It is found in the membrane. It carries out the reaction (-)-cyatha-3,12-diene + reduced [NADPH--hemoprotein reductase] + O2 = erinacol + oxidized [NADPH--hemoprotein reductase] + H2O + H(+). Its pathway is secondary metabolite biosynthesis. Cytochrome P450 monooxygenase; part of the gene cluster that mediates the biosynthesis of erinacines, cyathane-xylosides that show unique biological activities, including leishmanicidal activity, stimulating activity for nerve growth-factor synthesis, and agonistic activity toward the kappa opioid receptor. Within the pathway, eriI hydroxylates cyatha-3,12-diene at C-14 of the seven-membered ring to yield erinacol. The first step of the erinacines biosynthesis pathway is catalyzed by the geranylgeranyl diphosphate (GGPP) synthase eriE via conversion of farnesyl pyrophosphate and isopentyl pyrophosphate into geranylgeranyl pyrophosphate (GGPP). GGPP is then substrate of the diterpene cyclase eriG for the production of cyatha-3,12-diene. The cytochrome P450 monooxygenase eriI then hydroxylates cyatha-3,12-diene at C-14 of the seven-membered ring to produce erinacol, which is further hydroxylated at C-15 by the cytochrome P450 monooxygenase eriC to yield cyathadiol. The cytochrome P450 monooxygenase eriA then catalyzes C-11 hydroxylation in the presence of the short chain dehydrogenase/reductase (SDR) eriH, which leads to the production of cyathatriol. The acetyltransferase eriL converts cyathatriol into 11-O-acetyl-cyathatriol. The SDR eriH catalyzes further oxidation of 11-O-acetyl-cyathatriol into 1-O-acetylcyathin A3. Finally, the glycosyl transferase eriJ tranfers xylose from UDP-xylose onto C-14 of 11-O-acetyl-cyathatriol to form eracine Q. EriJ is also able to convert 11-O-acetyl-cyathatriol to eracine Q2 by using UDP-D-glucose as cosubstrate, but at a lower rate. In terms of biological role, cytochrome P450 monooxygenase; part of the gene cluster that mediates the biosynthesis of erinacines, cyathane-xylosides that show unique biological activities, including leishmanicidal activity, stimulating activity for nerve growth-factor synthesis, and agonistic activity toward the kappa opioid receptor. The geranylgeranyl diphosphate (GGPP) synthase eriE catalyzes the first step in erinacines biosynthesis via conversion of farnesyl pyrophosphate and isopentyl pyrophosphate into geranylgeranyl pyrophosphate (GGPP). GGPP is then substrate of the diterpene cyclase eriG for the production of cyatha-3,12-diene. EriG is unable to use geranyl diphosphate (GPP) or farnesyl diphosphate (FPP) as substrates. The cytochrome P450 monooxygenase eriI then hydroxylates cyatha-3,12-diene at C-14 of the seven-membered ring to produce erinacol, which is further hydroxylated at C-15 by the cytochrome P450 monooxygenase eriC to yield cyathadiol. The cytochrome P450 monooxygenase eriA then catalyzes C-11 hydroxylation in the presence of the short chain dehydrogenase/reductase (SDR) eriH, which leads to the production of cyathatriol. The acetyltransferase eriL converts cyathatriol into 11-O-acetyl-cyathatriol. The SDR eriH catalyzes further oxidation of 11-O-acetyl-cyathatriol into 1-O-acetylcyathin A3. Finally, the glycosyl transferase eriJ tranfers xylose from UDP-xylose onto C-14 of 11-O-acetyl-cyathatriol to form eracine Q. EriJ is also able to convert 11-O-acetyl-cyathatriol to eracine Q2 by using UDP-D-glucose as cosubstrate, but at a lower rate. In the absence of eriL and eriJ, the SDR eriH is able to convert cyathatriol to cyathin A3; this is likely a switching mechanism in the biosynthesis of cyathins (C-14 ketogroup)and erinacines (C-14 glycosylated group). The roles of the SDR eriB, the polyprenyl transferase eriF and the dehydrogenase eriK have still to be identified. In Hericium erinaceus (Lion's mane mushroom), this protein is Cytochrome P450 monooxyhenase eriI.